Consider the following 317-residue polypeptide: Melanocyte-stimulating hormone receptor (317 aa).

The Extracellular portion of the chain corresponds to 1-37 (MPMQGAQRRLLGSLNSTPTATPNLGLAANHTGAPCLE). Asparagine 29 is a glycosylation site (N-linked (GlcNAc...) asparagine). Residues 38 to 63 (VSIPHGLFLSLGLVSLVENVLVVAAI) traverse the membrane as a helical segment. Over 64–72 (AKNRNLHSP) the chain is Cytoplasmic. Residues 73 to 93 (MYCFICCLALSDLLVSGSNML) traverse the membrane as a helical segment. Topologically, residues 94–118 (ETAVILLLEAGALATRASVVQQLQN) are extracellular. A helical transmembrane segment spans residues 119-140 (TIDVLTCSSMLCSLCFLGAIAV). Over 141-163 (DRYVSIFYALRYHSIVTLPRARR) the chain is Cytoplasmic. A helical membrane pass occupies residues 164–183 (AIAAIWVASVLSSTLFIAYC). Residues 184-191 (DHAAVLLC) lie on the Extracellular side of the membrane. Residues 192 to 211 (LVVFFLAMLVLMAVLYVHML) traverse the membrane as a helical segment. Topologically, residues 212–240 (ARACQHAQGITRLHKRQLPAHQGFGLRGA) are cytoplasmic. The chain crosses the membrane as a helical span at residues 241 to 266 (ATLTILLGIFFLCWGPFFLHLMLVVL). Over 267–279 (CPQHLTCSCIFKN) the chain is Extracellular. The helical transmembrane segment at 280–300 (FKVFLTLIICNTIIDPLIYAF) threads the bilayer. The Cytoplasmic segment spans residues 301 to 317 (RSQELCRTLKEVLLCSW). Cysteine 315 carries the S-palmitoyl cysteine lipid modification.

Belongs to the G-protein coupled receptor 1 family. Interacts with MGRN1, but does not undergo MGRN1-mediated ubiquitination; this interaction competes with GNAS-binding and thus inhibits agonist-induced cAMP production. Interacts with OPN3; the interaction results in a decrease in MC1R-mediated cAMP signaling and ultimately a decrease in melanin production in melanocytes.

The protein localises to the cell membrane. Receptor for MSH (alpha, beta and gamma) and ACTH. The activity of this receptor is mediated by G proteins which activate adenylate cyclase. Mediates melanogenesis, the production of eumelanin (black/brown) and phaeomelanin (red/yellow), via regulation of cAMP signaling in melanocytes. This Alouatta caraya (Black howler monkey) protein is Melanocyte-stimulating hormone receptor (MC1R).